Here is a 429-residue protein sequence, read N- to C-terminus: 3-phosphoshikimate 1-carboxyvinyltransferase (429 aa).

3-phosphoshikimate is bound by residues Lys-21, Ser-22, and Arg-26. Position 21 (Lys-21) interacts with phosphoenolpyruvate. The phosphoenolpyruvate site is built by Gly-94 and Arg-122. 3-phosphoshikimate is bound by residues Ser-167, Gln-169, Asp-315, and Lys-342. A phosphoenolpyruvate-binding site is contributed by Gln-169. The Proton acceptor role is filled by Asp-315. Residues Arg-346 and Arg-388 each coordinate phosphoenolpyruvate.

This sequence belongs to the EPSP synthase family. As to quaternary structure, monomer.

The protein localises to the cytoplasm. The enzyme catalyses 3-phosphoshikimate + phosphoenolpyruvate = 5-O-(1-carboxyvinyl)-3-phosphoshikimate + phosphate. It functions in the pathway metabolic intermediate biosynthesis; chorismate biosynthesis; chorismate from D-erythrose 4-phosphate and phosphoenolpyruvate: step 6/7. Catalyzes the transfer of the enolpyruvyl moiety of phosphoenolpyruvate (PEP) to the 5-hydroxyl of shikimate-3-phosphate (S3P) to produce enolpyruvyl shikimate-3-phosphate and inorganic phosphate. In Desulforudis audaxviator (strain MP104C), this protein is 3-phosphoshikimate 1-carboxyvinyltransferase.